Reading from the N-terminus, the 340-residue chain is MAITVYYDKDCDLNLIKSKKVAIIGFGSQGHAHAMNLRDNGVNVTIGLREGSVSAVKAKNAGFEVMSVSEASKTADVVMILAPDEIQADIFNIEIKPNLSEGKAIAFAHGFNIHYGQIVAPKGIDVIMIAPKAPGHTVRNEFTLGGGTPCLIAIHQDESKNAKNLALSYASAIGGGRTGIIETTFKAETETDLFGEQAVLCGGLSALIQAGFETLVEAGYEPEMAYFECLHEMKLIVDLIYQGGIADMRYSISNTAEYGDYITGPKIITEETKKAMKGVLKDIQNGVFAKDFILERRAGFARMHAERKNMNDSLIEKTGRNLRAMMPWISAKKLVDKDKN.

Residues 1 to 183 (MAITVYYDKD…GGGRTGIIET (183 aa)) enclose the KARI N-terminal Rossmann domain. Residues 26–29 (FGSQ), Arg-49, Ser-52, Ser-54, and 84–87 (DEIQ) contribute to the NADP(+) site. His-109 is an active-site residue. NADP(+) is bound at residue Gly-135. The KARI C-terminal knotted domain occupies 184–329 (TFKAETETDL…RNLRAMMPWI (146 aa)). Positions 192, 196, 228, and 232 each coordinate Mg(2+). Ser-253 serves as a coordination point for substrate.

The protein belongs to the ketol-acid reductoisomerase family. It depends on Mg(2+) as a cofactor.

It catalyses the reaction (2R)-2,3-dihydroxy-3-methylbutanoate + NADP(+) = (2S)-2-acetolactate + NADPH + H(+). The catalysed reaction is (2R,3R)-2,3-dihydroxy-3-methylpentanoate + NADP(+) = (S)-2-ethyl-2-hydroxy-3-oxobutanoate + NADPH + H(+). Its pathway is amino-acid biosynthesis; L-isoleucine biosynthesis; L-isoleucine from 2-oxobutanoate: step 2/4. It functions in the pathway amino-acid biosynthesis; L-valine biosynthesis; L-valine from pyruvate: step 2/4. In terms of biological role, involved in the biosynthesis of branched-chain amino acids (BCAA). Catalyzes an alkyl-migration followed by a ketol-acid reduction of (S)-2-acetolactate (S2AL) to yield (R)-2,3-dihydroxy-isovalerate. In the isomerase reaction, S2AL is rearranged via a Mg-dependent methyl migration to produce 3-hydroxy-3-methyl-2-ketobutyrate (HMKB). In the reductase reaction, this 2-ketoacid undergoes a metal-dependent reduction by NADPH to yield (R)-2,3-dihydroxy-isovalerate. In Campylobacter jejuni subsp. jejuni serotype O:6 (strain 81116 / NCTC 11828), this protein is Ketol-acid reductoisomerase (NADP(+)).